The sequence spans 150 residues: Histone H2A.1 (150 aa).

At Met-1 the chain carries N-acetylmethionine. Basic residues-rich tracts occupy residues 1-24 (MDASTKTKKGAGGRKGGGPRKKSV) and 141-150 (SKAKKSPKKA). Disordered regions lie at residues 1–26 (MDASTKTKKGAGGRKGGGPRKKSVTR) and 128–150 (RKENAAASTPKSPSKAKKSPKKA). Short sequence motifs (SPKK motif) lie at residues 139–142 (SPSK) and 146–149 (SPKK).

It belongs to the histone H2A family. The nucleosome is a histone octamer containing two molecules each of H2A, H2B, H3 and H4 assembled in one H3-H4 heterotetramer and two H2A-H2B heterodimers. The octamer wraps approximately 147 bp of DNA. As to expression, high expression in root meristematic tissues, moderate in whole shoot and very low in mature leaves.

It is found in the nucleus. The protein resides in the chromosome. In terms of biological role, core component of nucleosome. Nucleosomes wrap and compact DNA into chromatin, limiting DNA accessibility to the cellular machineries which require DNA as a template. Histones thereby play a central role in transcription regulation, DNA repair, DNA replication and chromosomal stability. DNA accessibility is regulated via a complex set of post-translational modifications of histones, also called histone code, and nucleosome remodeling. The protein is Histone H2A.1 of Pisum sativum (Garden pea).